Here is a 130-residue protein sequence, read N- to C-terminus: Glycine cleavage system H protein (130 aa).

One can recognise a Lipoyl-binding domain in the interval 24–106 (TVTIGITDHA…YDEGWFFKVK (83 aa)). Lys65 is subject to N6-lipoyllysine.

This sequence belongs to the GcvH family. As to quaternary structure, the glycine cleavage system is composed of four proteins: P, T, L and H. The cofactor is (R)-lipoate.

The glycine cleavage system catalyzes the degradation of glycine. The H protein shuttles the methylamine group of glycine from the P protein to the T protein. This chain is Glycine cleavage system H protein, found in Teredinibacter turnerae (strain ATCC 39867 / T7901).